A 101-amino-acid chain; its full sequence is Small ribosomal subunit protein uS14 (101 aa).

It belongs to the universal ribosomal protein uS14 family. Part of the 30S ribosomal subunit. Contacts proteins S3 and S10.

Its function is as follows. Binds 16S rRNA, required for the assembly of 30S particles and may also be responsible for determining the conformation of the 16S rRNA at the A site. In Tropheryma whipplei (strain TW08/27) (Whipple's bacillus), this protein is Small ribosomal subunit protein uS14.